The primary structure comprises 1285 residues: DNA polymerase II large subunit (1285 aa).

Positions 565–586 (TRIGGRMGRPGKSKPREMRPPP) are disordered.

The protein belongs to the archaeal DNA polymerase II family. In terms of assembly, heterodimer of a large subunit and a small subunit. Post-translationally, this protein undergoes a protein self splicing that involves a post-translational excision of the intervening region (intein) followed by peptide ligation.

It catalyses the reaction DNA(n) + a 2'-deoxyribonucleoside 5'-triphosphate = DNA(n+1) + diphosphate. The catalysed reaction is Exonucleolytic cleavage in the 3'- to 5'-direction to yield nucleoside 5'-phosphates.. Functionally, possesses two activities: a DNA synthesis (polymerase) and an exonucleolytic activity that degrades single-stranded DNA in the 3'- to 5'-direction. Has a template-primer preference which is characteristic of a replicative DNA polymerase. This is DNA polymerase II large subunit from Methanoculleus marisnigri (strain ATCC 35101 / DSM 1498 / JR1).